The sequence spans 621 residues: uncharacterized protein (621 aa).

Positions 1-15 are cleaved as a signal peptide; sequence MRRSVCYVTPSVARA.

It belongs to the chlamydial CPn_0512/CT_425/TC_0708 family.

This is an uncharacterized protein from Chlamydia trachomatis serovar D (strain ATCC VR-885 / DSM 19411 / UW-3/Cx).